An 854-amino-acid chain; its full sequence is Nucleolar MIF4G domain-containing protein 1 (854 aa).

The tract at residues 2-275 (PRNVPEVNGV…EEDPDWQVLQ (274 aa)) is necessary for nucleolar localization and for targeting PPP1CA to the nucleolus. A Phosphoserine modification is found at Ser60. 2 disordered regions span residues 66–215 (ESRS…PLSF) and 231–333 (SGGG…GEKY). Over residues 76–99 (PGGRKSRKELRKEKRHLRKARRLQ) the composition is skewed to basic residues. Positions 104-113 (SGSGDQGGNV) are enriched in gly residues. The span at 128–173 (VRPTPAKATATPAKASAPSTNTKASAAQPKAKAKGAPGKPGPATAT) shows a compositional bias: low complexity. Positions 188-197 (REIRKLERCL) are enriched in basic and acidic residues. Over residues 265–280 (SEEDPDWQVLQEDQED) the composition is skewed to acidic residues. 3 stretches are compositionally biased toward basic and acidic residues: residues 281 to 291 (VNSKRRGEAES), 303 to 315 (RFAE…RSSS), and 322 to 331 (QESHSVESGE). The short motif at 301–304 (KVRF) is the Required for efficient binding to PPP1CA and for targeting PPP1CA to the nucleolus element. Phosphoserine occurs at positions 311, 314, and 315. Residues 356–553 (KKHVKGLINR…ETMLALKNND (198 aa)) enclose the MIF4G domain. In terms of domain architecture, MI spans 648 to 764 (DVRRIIFCTL…PLSVLKVVEF (117 aa)).

This sequence belongs to the CWC22 family. As to quaternary structure, may interact with EIF4A1, EIF4A2 and EIF4A3. Interacts with PPP1CA and PPP1CC.

It is found in the nucleus. The protein resides in the nucleolus. Its function is as follows. Plays a role in targeting PPP1CA to the nucleolus. In Mus musculus (Mouse), this protein is Nucleolar MIF4G domain-containing protein 1 (Nom1).